A 232-amino-acid polypeptide reads, in one-letter code: MAGDVGGRSCTDSELLLHPELLSQEFLLLTLEQKNITVENDMRVNKDSLTDLYVQHAIPLPQRDLPKSRWGKMMEKKREQHEIKKETKRSSPADGLRKRPLIVFDGSSTSTTIKVKKTENGDNDRLRPQPQASATSNTFRKSSDSSSSVSPLVLSSNLPTNNKMEHGNNDNKQNHDLTHRKSPLGPVRSPPLSPVGATPVKLKRAAPKEEAEASINLKPPEAKRKIQHVTWP.

Composition is skewed to basic and acidic residues over residues 64-97 (DLPK…DGLR) and 116-127 (KKTENGDNDRLR). The interval 64–232 (DLPKSRWGKM…KRKIQHVTWP (169 aa)) is disordered. A compositionally biased stretch (polar residues) spans 130–140 (PQASATSNTFR). Serine 143 is modified (phosphoserine). The span at 144-156 (DSSSSVSPLVLSS) shows a compositional bias: low complexity. Residues 163–179 (KMEHGNNDNKQNHDLTH) are compositionally biased toward basic and acidic residues. A phosphoserine mark is found at serine 182, serine 189, and serine 193. A Phosphothreonine modification is found at threonine 198.

The protein belongs to the ashwin family. As to quaternary structure, component of the tRNA-splicing ligase complex.

The protein localises to the nucleus. In Bos taurus (Bovine), this protein is Ashwin.